Consider the following 224-residue polypeptide: Thiamine-phosphate synthase (224 aa).

4-amino-2-methyl-5-(diphosphooxymethyl)pyrimidine contacts are provided by residues 44 to 48 (QFREK) and asparagine 79. Mg(2+) is bound by residues aspartate 80 and aspartate 99. Serine 117 is a binding site for 4-amino-2-methyl-5-(diphosphooxymethyl)pyrimidine. 2-[(2R,5Z)-2-carboxy-4-methylthiazol-5(2H)-ylidene]ethyl phosphate is bound at residue 143–145 (TET). Residue lysine 146 coordinates 4-amino-2-methyl-5-(diphosphooxymethyl)pyrimidine. Residues glycine 175 and 195-196 (IS) each bind 2-[(2R,5Z)-2-carboxy-4-methylthiazol-5(2H)-ylidene]ethyl phosphate.

This sequence belongs to the thiamine-phosphate synthase family. It depends on Mg(2+) as a cofactor.

It catalyses the reaction 2-[(2R,5Z)-2-carboxy-4-methylthiazol-5(2H)-ylidene]ethyl phosphate + 4-amino-2-methyl-5-(diphosphooxymethyl)pyrimidine + 2 H(+) = thiamine phosphate + CO2 + diphosphate. The enzyme catalyses 2-(2-carboxy-4-methylthiazol-5-yl)ethyl phosphate + 4-amino-2-methyl-5-(diphosphooxymethyl)pyrimidine + 2 H(+) = thiamine phosphate + CO2 + diphosphate. The catalysed reaction is 4-methyl-5-(2-phosphooxyethyl)-thiazole + 4-amino-2-methyl-5-(diphosphooxymethyl)pyrimidine + H(+) = thiamine phosphate + diphosphate. It participates in cofactor biosynthesis; thiamine diphosphate biosynthesis; thiamine phosphate from 4-amino-2-methyl-5-diphosphomethylpyrimidine and 4-methyl-5-(2-phosphoethyl)-thiazole: step 1/1. Functionally, condenses 4-methyl-5-(beta-hydroxyethyl)thiazole monophosphate (THZ-P) and 2-methyl-4-amino-5-hydroxymethyl pyrimidine pyrophosphate (HMP-PP) to form thiamine monophosphate (TMP). The chain is Thiamine-phosphate synthase from Bacillus velezensis (strain DSM 23117 / BGSC 10A6 / LMG 26770 / FZB42) (Bacillus amyloliquefaciens subsp. plantarum).